A 319-amino-acid chain; its full sequence is Acetyl-coenzyme A carboxylase carboxyl transferase subunit alpha (319 aa).

Residues 35-292 form the CoA carboxyltransferase C-terminal domain; it reads EISKLMRRLV…KKTIAEALAE (258 aa).

Belongs to the AccA family. Acetyl-CoA carboxylase is a heterohexamer composed of biotin carboxyl carrier protein (AccB), biotin carboxylase (AccC) and two subunits each of ACCase subunit alpha (AccA) and ACCase subunit beta (AccD).

It is found in the cytoplasm. The enzyme catalyses N(6)-carboxybiotinyl-L-lysyl-[protein] + acetyl-CoA = N(6)-biotinyl-L-lysyl-[protein] + malonyl-CoA. It functions in the pathway lipid metabolism; malonyl-CoA biosynthesis; malonyl-CoA from acetyl-CoA: step 1/1. Functionally, component of the acetyl coenzyme A carboxylase (ACC) complex. First, biotin carboxylase catalyzes the carboxylation of biotin on its carrier protein (BCCP) and then the CO(2) group is transferred by the carboxyltransferase to acetyl-CoA to form malonyl-CoA. The polypeptide is Acetyl-coenzyme A carboxylase carboxyl transferase subunit alpha (Desulfitobacterium hafniense (strain DSM 10664 / DCB-2)).